The sequence spans 64 residues: Purotoxin-2 (64 aa).

Positions 1–44 (AKACTPLLHDCSHDRHSCCRGDMFKYVCDCFYPEGEDKTEVCSC) are knottin domain. Disulfide bonds link Cys4–Cys19, Cys11–Cys28, Cys18–Cys44, and Cys30–Cys42. A linear cationic cytotoxin domain region spans residues 45–64 (QQPKSHKIAEKIIDKAKTTL). Leu64 is subject to Leucine amide.

Belongs to the neurotoxin 19 (CSTX) family. 05 (U4-Lctx) subfamily. Post-translationally, amidation at Leu-64 is not mandatory for activity on P2RX3. In terms of tissue distribution, expressed by the venom gland.

It is found in the secreted. Its function is as follows. Enhances the high-affinity desensitization of human P2RX3 purinoceptors. At 50 nM, the toxin decreases the IC(50) for ambient ATP from 2.67 nM to 0.77 nM in human P2RX3. The protein is Purotoxin-2 of Alopecosa marikovskyi (Wolf spider).